The sequence spans 632 residues: MSDCCSAPGISWEAGVGRPAVPGLELQIRRGAMSEETVSESQFSLKTAALRVFDLPLTWYYSLSQIKFSPVAKKLFVVTAVSAISVIFLAHHFKRKRGKKKGKILPWEPEHLILEYTKRAASDKGSSCSSSRQNLTLSLSSTKDKGSQVCNYANGGLFSKYSGSAQSLASVQSVNSCHSCACGNSNSWDKADEDDIKLVNIPVTTPENLYLMGMELFEEALRRWEQALTFRNRQAEDEACGSIKLGAGDAIAEENVDDIISTEFIHKLEALLQRAYRLQEEFEATLGASDPNSLADDIDKDTDITMKGNVEDFGLRDTLSIASTDSFASAAELAEHREVRHTYSLESLCHCPFYEEAMHLVEEGKIYSRVLRTEMLECLGDSDFLAKLHCIRQAFQVILSESANRIFLAESGRKILSALIVKARKNPKKFEDVFDEMIYFLEQTDHWGSTEMELAARGVKNLNFYDVVLDFILMDSFEDLENPPTSIQNVVNNRWLNSSFKETAVASSCWSVLKQKRQQMKIPDGFFAHFYAICEHISPVLAWGFLGPRNSLYDLCCFFKNQVLLFLKDIFDFEKVRYSSTETLAEDLMQLLIRRTELLMAYLEADALRHTSSCLSSHGHVMSTGLLEAKVQ.

The chain crosses the membrane as a helical span at residues 70-90 (PVAKKLFVVTAVSAISVIFLA). S289 and S293 each carry phosphoserine.

This sequence belongs to the mitoguardin family. Homodimer and heterodimer; forms heterodimers with MIGA2. Interacts with PLD6/MitoPLD.

It is found in the mitochondrion outer membrane. Its function is as follows. Regulator of mitochondrial fusion: acts by forming homo- and heterodimers at the mitochondrial outer membrane and facilitating the formation of PLD6/MitoPLD dimers. May act by regulating phospholipid metabolism via PLD6/MitoPLD. This is Mitoguardin 1 from Homo sapiens (Human).